We begin with the raw amino-acid sequence, 361 residues long: Biotin synthase (361 aa).

Residues 47-278 (VHGDEVALCG…AAHIFVMGGR (232 aa)) enclose the Radical SAM core domain. Positions 65, 69, and 72 each coordinate [4Fe-4S] cluster. The [2Fe-2S] cluster site is built by Ser-110, Cys-143, and Cys-203.

Belongs to the radical SAM superfamily. Biotin synthase family. Homodimer. The cofactor is [4Fe-4S] cluster. Requires [2Fe-2S] cluster as cofactor.

The catalysed reaction is (4R,5S)-dethiobiotin + (sulfur carrier)-SH + 2 reduced [2Fe-2S]-[ferredoxin] + 2 S-adenosyl-L-methionine = (sulfur carrier)-H + biotin + 2 5'-deoxyadenosine + 2 L-methionine + 2 oxidized [2Fe-2S]-[ferredoxin]. It participates in cofactor biosynthesis; biotin biosynthesis; biotin from 7,8-diaminononanoate: step 2/2. Functionally, catalyzes the conversion of dethiobiotin (DTB) to biotin by the insertion of a sulfur atom into dethiobiotin via a radical-based mechanism. The protein is Biotin synthase of Anaeromyxobacter dehalogenans (strain 2CP-C).